We begin with the raw amino-acid sequence, 596 residues long: Elongation factor 4 (596 aa).

Residues 2–183 (ENIRNFSIIA…AIIKRIPAPK (182 aa)) enclose the tr-type G domain. GTP contacts are provided by residues 14–19 (DHGKST) and 130–133 (NKID).

The protein belongs to the TRAFAC class translation factor GTPase superfamily. Classic translation factor GTPase family. LepA subfamily.

It is found in the cell inner membrane. The catalysed reaction is GTP + H2O = GDP + phosphate + H(+). Functionally, required for accurate and efficient protein synthesis under certain stress conditions. May act as a fidelity factor of the translation reaction, by catalyzing a one-codon backward translocation of tRNAs on improperly translocated ribosomes. Back-translocation proceeds from a post-translocation (POST) complex to a pre-translocation (PRE) complex, thus giving elongation factor G a second chance to translocate the tRNAs correctly. Binds to ribosomes in a GTP-dependent manner. This chain is Elongation factor 4, found in Campylobacter hominis (strain ATCC BAA-381 / DSM 21671 / CCUG 45161 / LMG 19568 / NCTC 13146 / CH001A).